A 532-amino-acid chain; its full sequence is Phosphoenolpyruvate carboxykinase (ATP) (532 aa).

Residues R60, Y194, and K200 each coordinate substrate. ATP is bound by residues K200, H219, and 237–245 (GLSGTGKTT). Mn(2+) is bound by residues K200 and H219. A Mn(2+)-binding site is contributed by D258. The ATP site is built by E286, R324, and T449. A substrate-binding site is contributed by R324.

Belongs to the phosphoenolpyruvate carboxykinase (ATP) family. Mn(2+) is required as a cofactor.

It localises to the cytoplasm. The enzyme catalyses oxaloacetate + ATP = phosphoenolpyruvate + ADP + CO2. Its pathway is carbohydrate biosynthesis; gluconeogenesis. Its function is as follows. Involved in the gluconeogenesis. Catalyzes the conversion of oxaloacetate (OAA) to phosphoenolpyruvate (PEP) through direct phosphoryl transfer between the nucleoside triphosphate and OAA. This Paracoccus denitrificans (strain Pd 1222) protein is Phosphoenolpyruvate carboxykinase (ATP).